We begin with the raw amino-acid sequence, 348 residues long: MKKWSRHLLAAGALALGMSAAHASDNDTLYFYNWTEYVPPGLLEQFTKETGIKVIYSTYESNETMYAKLKTYKDGAYDLVVPSTYYVDKMRKEGMIQKIDKSKLTNFHNLDPEMLNKPFDPNNDYSVPYIWGATAIGVNSDAIDPKTITSWADLWKPEYKNSLLLTDDAREVFQMALRKLGYSGNTTDPKEIEAAYEELKKLMPNVAAFNSDNPANPYMEGEVNLGMVWNGSAFVARQAGTPLEVVWPKEGGIFWMDSLAIPANAKNKEGALKLINFLLRPDVAKEVAETIGYPTPNLAARKLLSPEVANDKSLYPDAQTISKGEWQNDVGDASAIYEEYYQKLKAGR.

The first 23 residues, 1-23 (MKKWSRHLLAAGALALGMSAAHA), serve as a signal peptide directing secretion.

Belongs to the bacterial solute-binding protein PotD/PotF family.

It localises to the periplasm. Required for the activity of the bacterial periplasmic transport system of putrescine and spermidine. Polyamine binding protein. The sequence is that of Spermidine/putrescine-binding periplasmic protein (potD) from Salmonella typhi.